A 276-amino-acid chain; its full sequence is 4-hydroxy-tetrahydrodipicolinate reductase (276 aa).

Residues 18-23 (GASGRM) and Asp44 each bind NAD(+). Arg45 contacts NADP(+). Residues 107-109 (GTT) and 131-134 (APNM) contribute to the NAD(+) site. Catalysis depends on His164, which acts as the Proton donor/acceptor. His165 provides a ligand contact to (S)-2,3,4,5-tetrahydrodipicolinate. Catalysis depends on Lys168, which acts as the Proton donor. 174–175 (GT) lines the (S)-2,3,4,5-tetrahydrodipicolinate pocket.

The protein belongs to the DapB family.

The protein localises to the cytoplasm. The enzyme catalyses (S)-2,3,4,5-tetrahydrodipicolinate + NAD(+) + H2O = (2S,4S)-4-hydroxy-2,3,4,5-tetrahydrodipicolinate + NADH + H(+). It catalyses the reaction (S)-2,3,4,5-tetrahydrodipicolinate + NADP(+) + H2O = (2S,4S)-4-hydroxy-2,3,4,5-tetrahydrodipicolinate + NADPH + H(+). Its pathway is amino-acid biosynthesis; L-lysine biosynthesis via DAP pathway; (S)-tetrahydrodipicolinate from L-aspartate: step 4/4. Its function is as follows. Catalyzes the conversion of 4-hydroxy-tetrahydrodipicolinate (HTPA) to tetrahydrodipicolinate. This is 4-hydroxy-tetrahydrodipicolinate reductase from Aromatoleum aromaticum (strain DSM 19018 / LMG 30748 / EbN1) (Azoarcus sp. (strain EbN1)).